Reading from the N-terminus, the 662-residue chain is ATP-dependent RNA helicase DDX3X (662 aa).

Ser2 bears the N-acetylserine mark. The segment at 2 to 139 (SHVAVENALG…KSDEDDWSKP (138 aa)) is required for TBK1 and IKBKE-dependent IFNB1 activation. The Nuclear export signal motif lies at 12–21 (LDQQFAGLDL). A disordered region spans residues 19 to 144 (LDLNSSDNQS…DWSKPLPPSE (126 aa)). Residues 21–34 (LNSSDNQSGGSTAS) are compositionally biased toward polar residues. The interval 38–44 (YIPPHLR) is interaction with EIF4E. Residues 44–68 (RNREATKGFYDKDSSGWSSSKDKDA) are compositionally biased toward basic and acidic residues. Residue Lys55 is modified to N6-acetyllysine. Residues 70–89 (SSFGSRSDSRGKSSFFSDRG) are compositionally biased toward low complexity. The tract at residues 81–90 (KSSFFSDRGS) is interaction with VACV protein K7. A phosphoserine mark is found at Ser82, Ser86, and Ser90. An involved in binding to RNA G-quadruplex region spans residues 88–123 (RGSGSRGRFDDRGRSDYDGIGSRGDRSGFGKFERGG). The segment covering 94–130 (GRFDDRGRSDYDGIGSRGDRSGFGKFERGGNSRWCDK) has biased composition (basic and acidic residues). The interaction with IKBKE stretch occupies residues 100–110 (GRSDYDGIGSR). An interaction with GSK3B region spans residues 100-662 (GRSDYDGIGS…NSQGVDWWGN (563 aa)). Arg101 is subject to Omega-N-methylarginine. Ser102 is modified (phosphoserine; by IKKE). At Tyr104 the chain carries Phosphotyrosine. An Omega-N-methylarginine modification is found at Arg110. At Lys118 the chain carries N6-acetyllysine. A Phosphoserine modification is found at Ser131. The tract at residues 139–172 (PLPPSERLEQELFSGGNTGINFEKYDDIPVEATG) is interaction with CHUK. The Q motif signature appears at 180–208 (ESFSDVEMGEIIMGNIELTRYTRPTPVQK). Ser181 carries the phosphoserine; by TBK1; in vitro modification. Residue Ser183 is modified to Phosphoserine; by TBK1. ATP is bound at residue 200–207 (YTRPTPVQ). One can recognise a Helicase ATP-binding domain in the interval 211–403 (IPIIKEKRDL…RDFLDEYIFL (193 aa)). Lys215 participates in a covalent cross-link: Glycyl lysine isopeptide (Lys-Gly) (interchain with G-Cter in SUMO2). Residue 224-231 (AQTGSGKT) participates in ATP binding. At Ser240 the chain carries Phosphoserine; by TBK1; in vitro. The segment at 250–259 (ALRAMKENGR) is involved in stimulation of ATPase activity by DNA and RNA, nucleic acid binding and unwinding and HIV-1 replication. Residue Ser269 is modified to Phosphoserine; by TBK1; in vitro. A DEAD box motif is present at residues 347 to 350 (DEAD). An interaction with HCV core protein region spans residues 409–662 (GSTSENITQK…NSQGVDWWGN (254 aa)). The Helicase C-terminal domain maps to 414–575 (NITQKVVWVE…EVPSWLENMA (162 aa)). Ser429 carries the post-translational modification Phosphoserine; by CSNK1E and TBK1; in vitro. Position 438 is a phosphothreonine; by TBK1; in vitro (Thr438). Residues Ser442 and Ser456 each carry the phosphoserine; by TBK1; in vitro modification. Thr469 is modified (phosphothreonine; by CSNK1E; in vitro). Ser470 bears the Phosphoserine; by CSNK1E; in vitro mark. A Phosphoserine; by TBK1; in vitro modification is found at Ser520. The interval 536 to 661 (GNLGLATSFF…YNSQGVDWWG (126 aa)) is interaction with NXF1. Thr542 carries the phosphothreonine; by TBK1; in vitro modification. Residue Ser543 is modified to Phosphoserine; by CSNK1E and TBK1; in vitro. Arg592 is modified (omega-N-methylarginine). A phosphoserine mark is found at Ser594, Ser605, and Ser612. The disordered stretch occupies residues 601-634 (DYRQSSGASSSSFSSSRASSSRSGGGGHGSSRGF). Over residues 604-622 (QSSGASSSSFSSSRASSSR) the composition is skewed to low complexity. Arg617 and Arg632 each carry omega-N-methylarginine. The span at 623–634 (SGGGGHGSSRGF) shows a compositional bias: gly residues.

Belongs to the DEAD box helicase family. DDX3/DED1 subfamily. Homodimer; can bind RNA as a monomer and as a dimer/oligomer. Interacts with TDRD3. Interacts (when phosphorylated at Ser-102) with IRF3; the interaction facilitates the phosphorylation and activation of IRF3 by IKBKE. Directly interacts with XPO1/CRM1. The interaction with XPO1/CMR1 is dependent on the DDX3X nuclear export signal motif and XPO1 interaction with GTPase RAN in its active GTP-bound form. Weakly interacts with TBKBP1/SINTBAD. Directly interacts with TRAF3; this interaction stimulates TRAF3 'Lys-63' ubiquitination. Interacts with CSNK1E in a Wnt-dependent manner; this interaction greatly enhances CSNK1E affinity for ATP, stimulates its kinase activity and promotes CSNK1E-mediated DVL2 phosphorylation. In the presence of RNA, the interaction is decreased. Also interacts with CSNK1D and stimulates its kinase activity. Interacts with TRPV4; this interaction is decreased when the TRPV4 channel is activated, leading to DDX3X relocalization to the nucleus. Interacts with MAP3K14/NIK. Directly interacts with CHUK/IKKA after physiological activation of the TLR7 and TLR8 pathways; this interaction enhances CHUK autophosphorylation. May associate with EIF4F complex, composed of at least EIF4A, EIF4E and EIF4G1/EIF4G3. Directly interacts with EIF4E in an RNA-independent manner; this interaction enhances EIF4E cap-binding ability. Directly interacts with EIF4G1 in an RNA-independent manner. DDX3X competes with EIF4G1 for interaction with EIF4E. Interacts with EIF4A1 and EIF2S1 in an RNA-independent manner. Associates with the eukaryotic translation initiation factor 3 (eIF-3) complex, including with EIF3B and EIF3C subunits. Directly interacts with IKBKE/IKKE; this interaction stimulates IKBKE activating autophosphorylation and is induced upon viral infection. Interacts with TBK1. Interacts with SP1; this interaction potentiates SP1-induced CDKN1A/WAF1/CIP1 transcription. Interacts with GSK3A and GSK3B. Interacts with several death receptors, inclusing FAS, TNFRSF10A and TNFRSF10B. Recruited to TNFRSF10B in the absence of receptor stimulation. When TNFRSF10B is stimulated, further recruited to the receptor and cleaved by caspases. A large proteolytic fragment remains associated with TNFRSF10B. Interacts (via C-terminus) with NXF1/TAP; this interaction may be partly involved in DDX3X nuclear export and in NXF1 localization to stress granules. Identified in an mRNP complex, composed of at least DHX9, DDX3X, ELAVL1, HNRNPU, IGF2BP1/2, ILF3, PABPC1, PCBP2, PTBP2, STAU1, STAU2, SYNCRIP and YBX1. The interaction with IGF2BP1/2 is RNA-dependent. Directly interacts with PABPC1/PABP1 in an RNA-independent manner. This interaction increases in stressed cells and decreases during cell recovery. Interacts (via C-terminus) with MAVS/IPS-1; this interaction occurs rapidly, but transiently after Sendai virus infection. The interaction potentiates MAVS-mediated IFNB induction. Interacts with ERCC6/CBS. Interacts with DHX33 in an RNA-independent manner. Interacts with DDX5 in the cytoplasm; this interaction may be more efficient when both proteins are unphosphorylated. Interacts with RIGI/RIG-1. Interacts with IFIH1/MDA5. Interacts with NCAPH; this interaction may be important for the NCAPH localization at condensing chromosomes during mitosis. Interacts with NLRP3 (via NACHT domain) under inflammasome-activating conditions. Interacts with CAPRIN1. Interacts with HNF4A and NR0B2/SHP in an RNA-independent manner; this interaction disrupts the interaction between HNF4 and NR0B2 that forms inactive heterodimers and enhances the formation of active HNF4 homodimers. Interacts with CREBBP/CBP. Interacts with EP300/p300. Interacts with gamma-tubulin. Interacts with phosphorylated TP53. Directly interacts with RELA/p65; this interaction may trap RELA in the cytoplasm, impairing nuclear relocalization upon TNF activating signals. As to quaternary structure, (Microbial infection) Interacts with hepatitis B virus (HBV) polymerase in the cytoplasm; this interaction may inhibit DDX3X interaction with the IKBKE/TBK1 complex, and hence impair IKBKE/TBK1-mediated increase in IFNB production. In terms of assembly, (Microbial infection) Directly interacts with hepatitis C virus (HCV) core protein in the cytoplasm. (Microbial infection) Interacts with vaccinia virus (VACV) protein K7. As to quaternary structure, (Microbial infection) Interacts with HIV-1 protein Rev. In terms of assembly, (Microbial infection) Interacts with Venezuelan equine encephalitis virus non-structural protein 3. Post-translationally, phosphorylated by TBK1; the phosphorylation is required for the synergistic induction of IFNB mediated by TBK1 and DDX3X. Phosphorylated by IKBKE at Ser-102 after ssRNA viral infection; enhances the induction of INFB promoter by IRF3. The cytoplasmic form is highly phosphorylated in the G1/S phase of the cell cycle and much less at G2/M. Phosphorylation by CSNK1E may inhibit RNA-stimulated ATPase activity. In terms of processing, upon stimulation of death receptors, including TNFRSF10B, recruited to receptors and cleaved by caspases. Proteolytic fragments remain associated with the receptors. This cleavage presumably inactivates DDX3X anti-apoptotic function. Ubiquitinated by RNF39 via 'Lys-48'-linked ubiquitination; leading to proteasomal degradation. Widely expressed. In testis, expressed in spermatids. Expressed in epidermis and liver (at protein level).

Its subcellular location is the cell membrane. The protein localises to the nucleus. It is found in the cytoplasm. The protein resides in the stress granule. It localises to the inflammasome. Its subcellular location is the cell projection. The protein localises to the lamellipodium. It is found in the cytoskeleton. The protein resides in the microtubule organizing center. It localises to the centrosome. It catalyses the reaction ATP + H2O = ADP + phosphate + H(+). In terms of biological role, multifunctional ATP-dependent RNA helicase. The ATPase activity can be stimulated by various ribo-and deoxynucleic acids indicative for a relaxed substrate specificity. In vitro can unwind partially double-stranded DNA with a preference for 5'-single-stranded DNA overhangs. Binds RNA G-quadruplex (rG4s) structures, including those located in the 5'-UTR of NRAS mRNA. Involved in many cellular processes, which do not necessarily require its ATPase/helicase catalytic activities. Involved in transcription regulation. Positively regulates CDKN1A/WAF1/CIP1 transcription in an SP1-dependent manner, hence inhibits cell growth. This function requires its ATPase, but not helicase activity. CDKN1A up-regulation may be cell-type specific. Binds CDH1/E-cadherin promoter and represses its transcription. Potentiates HNF4A-mediated MTTP transcriptional activation; this function requires ATPase, but not helicase activity. Facilitates HNF4A acetylation, possibly catalyzed by CREBBP/EP300, thereby increasing the DNA-binding affinity of HNF4 to its response element. In addition, disrupts the interaction between HNF4 and SHP that forms inactive heterodimers and enhances the formation of active HNF4 homodimers. By promoting HNF4A-induced MTTP expression, may play a role in lipid homeostasis. May positively regulate TP53 transcription. Associates with mRNPs, predominantly with spliced mRNAs carrying an exon junction complex (EJC). Involved in the regulation of translation initiation. Not involved in the general process of translation, but promotes efficient translation of selected complex mRNAs, containing highly structured 5'-untranslated regions (UTR). This function depends on helicase activity. Might facilitate translation by resolving secondary structures of 5'-UTRs during ribosome scanning. Alternatively, may act prior to 43S ribosomal scanning and promote 43S pre-initiation complex entry to mRNAs exhibiting specific RNA motifs, by performing local remodeling of transcript structures located close to the cap moiety. Independently of its ATPase activity, promotes the assembly of functional 80S ribosomes and disassembles from ribosomes prior to the translation elongation process. Positively regulates the translation of cyclin E1/CCNE1 mRNA and consequently promotes G1/S-phase transition during the cell cycle. May activate TP53 translation. Required for endoplasmic reticulum stress-induced ATF4 mRNA translation. Independently of its ATPase/helicase activity, enhances IRES-mediated translation; this activity requires interaction with EIF4E. Independently of its ATPase/helicase activity, has also been shown specifically repress cap-dependent translation, possibly by acting on translation initiation factor EIF4E. Involved in innate immunity, acting as a viral RNA sensor. Binds viral RNAs and promotes the production of type I interferon (IFN-alpha and IFN-beta). Potentiate MAVS/RIGI-mediated induction of IFNB in early stages of infection. Enhances IFNB1 expression via IRF3/IRF7 pathway and participates in NFKB activation in the presence of MAVS and TBK1. Involved in TBK1 and IKBKE-dependent IRF3 activation leading to IFNB induction, acts as a scaffolding adapter that links IKBKE and IRF3 and coordinates their activation. Involved in the TLR7/TLR8 signaling pathway leading to type I interferon induction, including IFNA4 production. In this context, acts as an upstream regulator of IRF7 activation by MAP3K14/NIK and CHUK/IKKA. Stimulates CHUK autophosphorylation and activation following physiological activation of the TLR7 and TLR8 pathways, leading to MAP3K14/CHUK-mediated activatory phosphorylation of IRF7. Also stimulates MAP3K14/CHUK-dependent NF-kappa-B signaling. Negatively regulates TNF-induced IL6 and IL8 expression, via the NF-kappa-B pathway. May act by interacting with RELA/p65 and trapping it in the cytoplasm. May also bind IFNB promoter; the function is independent of IRF3. Involved in both stress and inflammatory responses. Independently of its ATPase/helicase activity, required for efficient stress granule assembly through its interaction with EIF4E, hence promotes survival in stressed cells. Independently of its helicase activity, regulates NLRP3 inflammasome assembly through interaction with NLRP3 and hence promotes cell death by pyroptosis during inflammation. This function is independent of helicase activity. Therefore DDX3X availability may be used to interpret stress signals and choose between pro-survival stress granules and pyroptotic NLRP3 inflammasomes and serve as a live-or-die checkpoint in stressed cells. In association with GSK3A/B, negatively regulates extrinsic apoptotic signaling pathway via death domain receptors, including TNFRSF10B, slowing down the rate of CASP3 activation following death receptor stimulation. Cleavage by caspases may inactivate DDX3X and relieve the inhibition. Independently of its ATPase/helicase activity, allosteric activator of CSNK1E. Stimulates CSNK1E-mediated phosphorylation of DVL2, thereby involved in the positive regulation of Wnt/beta-catenin signaling pathway. Also activates CSNK1A1 and CSNK1D in vitro, but it is uncertain if these targets are physiologically relevant. ATPase and casein kinase-activating functions are mutually exclusive. May be involved in mitotic chromosome segregation. (Microbial infection) Facilitates hepatitis C virus (HCV) replication. During infection, HCV core protein inhibits the interaction between MAVS and DDX3X and therefore impairs MAVS-dependent INFB induction and might recruit DDX3X to HCV replication complex. Functionally, (Microbial infection) Facilitates HIV-1 replication. Acts as a cofactor for XPO1-mediated nuclear export of HIV-1 Rev RNAs. This function is strongly stimulated in the presence of TBK1 and requires DDX3X ATPase activity. Its function is as follows. (Microbial infection) Facilitates Zika virus (ZIKV) replication. In terms of biological role, (Microbial infection) Facilitates Dengue virus (DENV) replication. (Microbial infection) Facilitates Venezuelan equine encephalitis virus (VEEV) replication. The chain is ATP-dependent RNA helicase DDX3X (DDX3X) from Homo sapiens (Human).